A 282-amino-acid chain; its full sequence is Bifunctional protein FolD (282 aa).

NADP(+) is bound by residues 165 to 167 (GRS), Ser190, and Thr231.

This sequence belongs to the tetrahydrofolate dehydrogenase/cyclohydrolase family. In terms of assembly, homodimer.

It catalyses the reaction (6R)-5,10-methylene-5,6,7,8-tetrahydrofolate + NADP(+) = (6R)-5,10-methenyltetrahydrofolate + NADPH. It carries out the reaction (6R)-5,10-methenyltetrahydrofolate + H2O = (6R)-10-formyltetrahydrofolate + H(+). Its pathway is one-carbon metabolism; tetrahydrofolate interconversion. Its function is as follows. Catalyzes the oxidation of 5,10-methylenetetrahydrofolate to 5,10-methenyltetrahydrofolate and then the hydrolysis of 5,10-methenyltetrahydrofolate to 10-formyltetrahydrofolate. In Clostridium beijerinckii (strain ATCC 51743 / NCIMB 8052) (Clostridium acetobutylicum), this protein is Bifunctional protein FolD.